A 158-amino-acid chain; its full sequence is Transcription elongation factor GreA (158 aa).

Belongs to the GreA/GreB family.

Functionally, necessary for efficient RNA polymerase transcription elongation past template-encoded arresting sites. The arresting sites in DNA have the property of trapping a certain fraction of elongating RNA polymerases that pass through, resulting in locked ternary complexes. Cleavage of the nascent transcript by cleavage factors such as GreA or GreB allows the resumption of elongation from the new 3'terminus. GreA releases sequences of 2 to 3 nucleotides. This is Transcription elongation factor GreA from Pelagibacter ubique (strain HTCC1062).